The primary structure comprises 387 residues: Mannitol-1-phosphate 5-dehydrogenase (387 aa).

Residue 3–14 (ALHFGAGNIGRG) coordinates NAD(+).

Belongs to the mannitol dehydrogenase family.

It carries out the reaction D-mannitol 1-phosphate + NAD(+) = beta-D-fructose 6-phosphate + NADH + H(+). The polypeptide is Mannitol-1-phosphate 5-dehydrogenase (Yersinia pestis bv. Antiqua (strain Antiqua)).